Consider the following 461-residue polypeptide: Phytase A (461 aa).

Cysteines 22 and 31 form a disulfide. Gln41, Tyr42, Arg71, His72, Arg75, and Thr78 together coordinate 1D-myo-inositol hexakisphosphate. 4 disulfide bridges follow: Cys61/Cys405, Cys205/Cys456, Cys254/Cys272, and Cys427/Cys435. The Nucleophile role is filled by His72. Asn95 and Asn110 each carry an N-linked (GlcNAc...) asparagine glycan. Arg155 is a binding site for 1D-myo-inositol hexakisphosphate. Asn197 carries N-linked (GlcNAc...) asparagine glycosylation. Lys291 contributes to the 1D-myo-inositol hexakisphosphate binding site. N-linked (GlcNAc...) asparagine glycans are attached at residues Asn329 and Asn343. 2 residues coordinate 1D-myo-inositol hexakisphosphate: His352 and Asp353. N-linked (GlcNAc...) asparagine glycosylation is present at Asn367.

This sequence belongs to the histidine acid phosphatase family. Monomer. Post-translationally, glycosylated.

The protein resides in the secreted. It carries out the reaction 1D-myo-inositol hexakisphosphate + H2O = 1D-myo-inositol 1,2,4,5,6-pentakisphosphate + phosphate. It catalyses the reaction 1D-myo-inositol 1,2,4,5,6-pentakisphosphate + H2O = 1D-myo-inositol 1,2,5,6-tetrakisphosphate + phosphate. The catalysed reaction is 1D-myo-inositol 1,2,5,6-tetrakisphosphate + H2O = 1D-myo-inositol 1,2,6-trisphosphate + phosphate. The enzyme catalyses 1D-myo-inositol 1,2,6-trisphosphate + H2O = 1D-myo-inositol 1,2-bisphosphate + phosphate. It carries out the reaction 1D-myo-inositol 1,2-bisphosphate + H2O = 1D-myo-inositol 2-phosphate + phosphate. Functionally, catalyzes the phosphate monoester hydrolysis of phytic acid (myo-inositol hexakisphosphate), which results in the stepwise formation of myo-inositol pentakis-, tetrakis-, tris-, bis-, and monophosphates, as well as the liberation of inorganic phosphate. Myo-inositol 2-monophosphate is the end product. This chain is Phytase A, found in Penicillium oxalicum.